The sequence spans 1050 residues: Diacylglycerol kinase iota (1050 aa).

Disordered regions lie at residues 53 to 74, 92 to 111, and 328 to 356; these read PSSS…GSGA, AAAA…EKEE, and SLKA…ETKG. Low complexity predominate over residues 92–105; the sequence is AAAAAALEEPAAAG. Positions 332–347 are enriched in basic residues; that stretch reads SNRKKKRTSFKRKASK. The DAGKc domain occupies 367–502; that stretch reads PLMKPLLVFV…DRWNLHVERN (136 aa). ANK repeat units lie at residues 943 to 972 and 979 to 1008; these read GHCS…AELL and TGET…SLRQ. The PDZ-binding signature appears at 1048–1050; it reads TAV.

This sequence belongs to the eukaryotic diacylglycerol kinase family. In terms of assembly, interacts (via PDZ-binding motif) with DLG4; controls the localization of DGKI to the synapse. Interacts (via PDZ-binding motif) with DLG1. Interacts (via PDZ-binding motif) with DLG2. Interacts (via PDZ-binding motif) with DLG3. May interact with RASGRP3; involved in the regulation of RASGRP3 activity. In brain, expressed in the hippocampus and cerebellum with stronger expression in the Purkinje cell layer (at protein level). Expressed in kidney.

It is found in the cell projection. Its subcellular location is the axon. The protein localises to the dendrite. It localises to the presynapse. The protein resides in the postsynapse. It is found in the postsynaptic density. Its subcellular location is the synaptic cell membrane. The protein localises to the cytoplasmic vesicle. It localises to the secretory vesicle. The protein resides in the synaptic vesicle membrane. It is found in the cytoplasm. Its subcellular location is the cytosol. The protein localises to the nucleus. The enzyme catalyses a 1,2-diacyl-sn-glycerol + ATP = a 1,2-diacyl-sn-glycero-3-phosphate + ADP + H(+). It carries out the reaction 1,2-di-(9Z-octadecenoyl)-sn-glycerol + ATP = 1,2-di-(9Z-octadecenoyl)-sn-glycero-3-phosphate + ADP + H(+). The catalysed reaction is 1-octadecanoyl-2-(5Z,8Z,11Z,14Z-eicosatetraenoyl)-sn-glycerol + ATP = 1-octadecanoyl-2-(5Z,8Z,11Z,14Z-eicosatetraenoyl)-sn-glycero-3-phosphate + ADP + H(+). It catalyses the reaction 1-octadecanoyl-2-(9Z,12Z)-octadecadienoyl-sn-glycerol + ATP = 1-octadecanoyl-2-(9Z,12Z-octadecadienoyl)-sn-glycero-3-phosphate + ADP + H(+). Its pathway is lipid metabolism; glycerolipid metabolism. In terms of biological role, diacylglycerol kinase that converts diacylglycerol/DAG into phosphatidic acid/phosphatidate/PA and regulates the respective levels of these two bioactive lipids. Thereby, acts as a central switch between the signaling pathways activated by these second messengers with different cellular targets and opposite effects in numerous biological processes. Has probably no preference for any of the diacylglycerols in terms of the acyl chain composition, especially for the acyl chain at the sn-2 position. By controlling the diacylglycerol/DAG-mediated activation of RASGRP3, negatively regulates the Rap1 signaling pathway. May play a role in presynaptic diacylglycerol/DAG signaling and control neurotransmitter release during metabotropic glutamate receptor-dependent long-term depression. The protein is Diacylglycerol kinase iota of Mus musculus (Mouse).